A 728-amino-acid polypeptide reads, in one-letter code: Catalase-peroxidase 1 (728 aa).

Positions 91-218 (WHSAGTYRTA…LAAVQMGLIY (128 aa)) form a cross-link, tryptophyl-tyrosyl-methioninium (Trp-Tyr) (with M-244). The active-site Proton acceptor is H92. The tryptophyl-tyrosyl-methioninium (Tyr-Met) (with W-91) cross-link spans 218 to 244 (YVNPEGPDGNPDPVAAAHDIRETFARM). H259 is a heme b binding site.

The protein belongs to the peroxidase family. Peroxidase/catalase subfamily. As to quaternary structure, homodimer or homotetramer. Heme b is required as a cofactor. Formation of the three residue Trp-Tyr-Met cross-link is important for the catalase, but not the peroxidase activity of the enzyme.

The enzyme catalyses H2O2 + AH2 = A + 2 H2O. The catalysed reaction is 2 H2O2 = O2 + 2 H2O. Bifunctional enzyme with both catalase and broad-spectrum peroxidase activity. In Burkholderia orbicola (strain MC0-3), this protein is Catalase-peroxidase 1.